The primary structure comprises 158 residues: Snaclec jerdonuxin subunit alpha (158 aa).

A signal peptide spans 1 to 23 (MGRFTFVSFGLLVVFLSLSGTGA). Intrachain disulfides connect C27–C38, C55–C152, and C127–C144. Residues 34-153 (YDRYCYQAFS…CGTENPFVCK (120 aa)) enclose the C-type lectin domain.

This sequence belongs to the snaclec family. Tetramer of 4 heterodimers of alpha and beta subunits; disulfide-linked. In terms of tissue distribution, expressed by the venom gland.

Its subcellular location is the secreted. Functionally, snaclec that strongly induces platelet aggregation, in a dose-dependent manner. The sequence is that of Snaclec jerdonuxin subunit alpha from Protobothrops jerdonii (Jerdon's pitviper).